The primary structure comprises 170 residues: Histone H1.9 (170 aa).

One can recognise an H15 domain in the interval 34–108 (RKPTMSYVIL…GASGSLCLCK (75 aa)). A Phosphoserine modification is found at Ser56. Positions 118 to 140 (AKRCQDRQKSQKPQKPGQRESEP) are disordered.

It belongs to the histone H1/H5 family. In terms of tissue distribution, expressed exclusively in the testis by haploid germ cells (at protein level).

Its subcellular location is the nucleus. It localises to the chromosome. DNA-binding protein that may be implicated in chromatin remodeling and/or transcriptional regulation during spermiogenesis, the process of spermatid maturation into spermatozoa. The polypeptide is Histone H1.9 (Mus musculus (Mouse)).